Consider the following 271-residue polypeptide: Membrane protein insertase YidC 1 (271 aa).

The first 20 residues, M1–A20, serve as a signal peptide directing secretion. C21 carries N-palmitoyl cysteine lipidation. C21 carries the S-diacylglycerol cysteine lipid modification. Transmembrane regions (helical) follow at residues I45 to I65, Y124 to L144, P163 to L183, and V201 to W221.

This sequence belongs to the OXA1/ALB3/YidC family. Type 2 subfamily.

It is found in the cell membrane. Its function is as follows. Required for the insertion and/or proper folding and/or complex formation of integral membrane proteins into the membrane. Involved in integration of membrane proteins that insert both dependently and independently of the Sec translocase complex, as well as at least some lipoproteins. The protein is Membrane protein insertase YidC 1 of Streptococcus agalactiae serotype V (strain ATCC BAA-611 / 2603 V/R).